The following is a 471-amino-acid chain: MAGEMTILGSAVLTLLLAGYLAQQYLPLPTPKVIGIDLGTTYCSVGVFFPGTGKVKVIPDENGHISIPSMVSFTDGDVYVGYESLELADSNPQNTIYDAKRFIGKIFTPEELEAEIGRYPFKVLHKNGMAEFSVTSNETIIVSPEYVGSRLLLKLKEMAEKYLGMPVANAVISVPAEFDLQQRNSTIQAANLAGLKILRVINEPTAAAMAYGLHKVDVFYVLVIDLGGGTLDVSLLNKQGGMFLTRAMSGNNKLGGQDFNQRLLQYLYKEIYQTYGFLPSRKEEIHRLRQAVEMVKLNLTLHQSAQVSVLLTVEENDSQKPQNADSKLPEDQLTPGDGHHVNRVFRPGLSDSTSGKSQVLFETEVSRKLFNTLNEDLFQKILVPIQQVLKEGLLDKTEIDEVVLVGGSTRIPRIRQVIQEFFGKDPNTSVDPDLAVVTGVAIQAGIDGGSWPLQVSALEIPNKHLQKTNFN.

An N-terminal signal peptide occupies residues 1–22; sequence MAGEMTILGSAVLTLLLAGYLA. N-linked (GlcNAc...) asparagine glycosylation occurs at Asn-184. Residues 316 to 339 are disordered; that stretch reads NDSQKPQNADSKLPEDQLTPGDGH.

It belongs to the heat shock protein 70 family. As to quaternary structure, binds UBQLN2.

Its subcellular location is the microsome. It is found in the endoplasmic reticulum. In terms of biological role, has peptide-independent ATPase activity. This chain is Heat shock 70 kDa protein 13 (Hspa13), found in Rattus norvegicus (Rat).